A 1315-amino-acid chain; its full sequence is Claspin (1315 aa).

2 disordered regions span residues 22–276 (EAAD…AARL) and 345–474 (PADA…EQKT). Residues Ser26, Ser42, Ser46, Ser53, Ser65, and Ser67 each carry the phosphoserine modification. Residues 65–74 (SDSEAEDRDD) show a composition bias toward acidic residues. Residues 91–101 (NLHSGKSQSRS) show a composition bias toward polar residues. A compositionally biased stretch (acidic residues) spans 108–118 (DSDESDMEETP). Phosphoserine occurs at positions 109, 112, and 119. Positions 119 to 128 (SQESPETQEA) are enriched in polar residues. Basic and acidic residues-rich tracts occupy residues 153-178 (LLRE…MEKI) and 186-197 (TRCEESDADRPL). The stretch at 159-187 (EGKAKSKRRLEKEERTMEKIRRLKKKETR) forms a coiled coil. Over residues 205–228 (EDSDLFETGLEEENDSALEDEESL) the composition is skewed to acidic residues. Ser220 bears the Phosphoserine mark. The segment covering 235–245 (VKNKVKNRKKK) has biased composition (basic residues). Ser255 carries the phosphoserine modification. 2 stretches are compositionally biased toward basic and acidic residues: residues 391–415 (ACGK…DDRP) and 455–470 (EELK…EGMP). The residue at position 522 (Ser522) is a Phosphoserine. The stretch at 599 to 626 (EKLQMLKAKLQEAMKLRRLEERQKRQAL) forms a coiled coil. The disordered stretch occupies residues 625–691 (ALFKLDNEDG…SSDIGKSVAL (67 aa)). The span at 632–657 (EDGFEEEEEEEEMTDESEEDGEEETT) shows a compositional bias: acidic residues. Over residues 669–679 (KDEKETDKENT) the composition is skewed to basic and acidic residues. 5 positions are modified to phosphoserine: Ser698, Ser701, Ser709, Ser722, and Ser740. The tract at residues 713 to 750 (MGYFPTEEKSETDEYLAKQSDKLDEDDSSSLLTKESSH) is disordered. Over residues 741-750 (SSLLTKESSH) the composition is skewed to low complexity. Residues Ser785, Ser787, Ser810, Ser816, and Ser823 each carry the phosphoserine modification. Lys868 bears the N6-acetyllysine mark. CKB motif repeat units lie at residues 887-896 (ELLDLCTGQF) and 917-926 (ELLNLCSGKF). Thr893 is modified (phosphothreonine; by CHEK1). 2 disordered regions span residues 924–1002 (GKFP…NDEE) and 1032–1052 (EDEA…DGEE). A Phosphoserine modification is found at Ser932. One copy of the CKB motif 3 repeat lies at 954–963 (EALALCSGSF). The interval 966 to 1063 (DREEEGEEEE…DEYEEDVIDE (98 aa)) is acidic patch. Acidic residues-rich tracts occupy residues 967–977 (REEEGEEEEFG), 990–1002 (SDED…NDEE), and 1043–1052 (GSEDEYDGEE). 3 positions are modified to phosphoserine: Ser990, Ser996, and Ser998. The stretch at 1001-1036 (EELALDLEDDEEELLKQSEKMKRQMRLKKYLEDEAE) forms a coiled coil. Ser1133 and Ser1265 each carry phosphoserine. The interval 1264 to 1315 (LSPTKAEAAKDSSKPQVRRRGLSSMMSPSPKRLKTNGSSPGPKRSIFRYLES) is disordered.

It belongs to the claspin family. In terms of assembly, interacts (phosphorylation-dependent) with CHEK1; regulates CLSPN function in checkpoint for DNA damage and replication. Interacts with ATR and RAD9A and these interactions are slightly reduced during checkpoint activation. Interacts with BRCA1 and this interaction increases during checkpoint activation. Interacts with TIMELESS; the interaction is required for leading-strand replication. Associates with the MCM2-7 complex and other replisome factors. Interacts (via the acidic patch) with CDC7; the interaction is required for phosphorylation of MCM proteins and CLASPIN by CDC7. Interacts with PCNA. Interacts with FZR1. In terms of processing, phosphorylated. Undergoes ATR-dependent phosphorylation by CHEK1 during activation of DNA replication or damage checkpoints. Phosphorylation by CSNK1G1/CK1 promotes CHEK1 binding. Phosphorylated by CDC7 during DNA replication, phosphorylation inhibits interaction between the acidic patch and N-terminal segments leading to increased binding to DNA and PCNA. Ubiquitinated by the anaphase promoting complex/cyclosome (APC/C) during G1 phase, leading to its degradation by the proteasome. Ubiquitination is mediated via its interaction with FZR1/CDH1. Following DNA damage, it is deubiquitinated by USP28 in G2 phase, preventing its degradation. Post-translationally, proteolytically cleaved by caspase-7 (CASP7) in response to apoptosis, leading to its inactivation.

The protein localises to the nucleus. Functionally, required for checkpoint mediated cell cycle arrest in response to inhibition of DNA replication or to DNA damage induced by both ionizing and UV irradiation. Adapter protein which binds to BRCA1 and the checkpoint kinase CHEK1 and facilitates the ATR-dependent phosphorylation of both proteins. Also required to maintain normal rates of replication fork progression during unperturbed DNA replication. Binds directly to DNA, with particular affinity for branched or forked molecules and interacts with multiple protein components of the replisome such as the MCM2-7 complex and TIMELESS. Important for initiation of DNA replication, recruits kinase CDC7 to phosphorylate MCM2-7 components. The protein is Claspin (Clspn) of Mus musculus (Mouse).